Reading from the N-terminus, the 312-residue chain is Polyprenyl transferase atnF (312 aa).

N9 is a glycosylation site (N-linked (GlcNAc...) asparagine). Helical transmembrane passes span 30-50 (LHTIEGLSTASIGWLALFFYA), 64-84 (FIGIFATYQMTHCVFCLWNDI), 111-131 (AMWVFVLGVFASMGVTYWLLG), 132-152 (ADVTLTMVPIWVLSFIYPLCK), 154-174 (IIWAPQVVLGLTMALCVLPPW), 185-205 (GLLPASLFGAIFCWLVYLDLI), 229-249 (YLKAGLTVLGVLQVVCFVLAA), 255-275 (GFLLWVFGIAVWSASVPWSIM), and 288-308 (IFLVNAILGIYMAAVSGLNVS).

The protein belongs to the UbiA prenyltransferase family. Requires Mg(2+) as cofactor.

The protein localises to the membrane. It functions in the pathway secondary metabolite biosynthesis; terpenoid biosynthesis. Functionally, polyprenyl transferase; part of the gene cluster that mediates the biosynthesis of the meroterpenoids arthripenoids. The pathway begins with the HR-PKS atnH that catalyzes two chain-extension steps to form a reduced triketide, which then primes the SAT domain in the NR-PKS atnG to initiate three more cycles of extension to give a linear hexaketide corresponding to the polyketide part of arthripenoids. The FAD-dependent monooxygenase atnJ then performs an oxidative decarboxylation at C11 of the atnH/atnG product, via an electrophilic aromatic hydroxylation with concomitant ipso-decarboxylation. The membrane-bound polyprenyl transferase atnF then introduces a farnesyl group before the FAD-dependent monooxygenase atnK functions as the first epoxidase on terminal C12'-C13' olefin, followed by a second epoxidation on C7'-C8' catalyzed by atnA. The terpene cyclase/mutase atnI then initiates the sequential tricyclic ring formation through protonation of the terminal epoxide and catalyzes the regioselective and stereoselective 6/6/6-tricyclic ring formation. The cytochrome P450 monooxygenase atnM is responsible for hydroxylating both C1' and C10'. The next steps may involve ketoreduction and acetyl transfer by the ketoreductase atnB and the acetyltransferase atnC, and lead to the production of arthripenoid B, the final biosynthetic product of the atn cluster. The hydroquinone moiety in arthripenoid B is prone to undergo spontaneous oxidation to afford a benzoquinone compound, a key intermediate for generating structure diversity. For instance, addition of a cysteine followed by ring contraction gives arthripenoid A, tautomerization gives the main product arthripenoid C, addition of a molecular of water or amine affords arthripenoid D or E, respectively, and loss of one water forms arthripenoid F. The chain is Polyprenyl transferase atnF from Arthrinium sp.